The chain runs to 369 residues: RNA-binding protein rnp24 (369 aa).

3 disordered regions span residues Met1–Glu77, Thr200–Ile219, and Arg304–Asp369. An RRM 1 domain is found at Trp105–Pro206. Over residues Pro209–Ile219 the composition is skewed to polar residues. In terms of domain architecture, RRM 2 spans Ser228 to Pro310. The span at Gln325–Ser341 shows a compositional bias: basic and acidic residues. The segment covering Ala346 to Ala357 has biased composition (low complexity).

The protein localises to the nucleus. The polypeptide is RNA-binding protein rnp24 (rnp24) (Schizosaccharomyces pombe (strain 972 / ATCC 24843) (Fission yeast)).